The following is a 264-amino-acid chain: Isoprenyl transferase (264 aa).

The active site involves D43. A Mg(2+)-binding site is contributed by D43. Substrate-binding positions include 44–47 (GNGR), W48, R56, H60, and 88–90 (STE). The active-site Proton acceptor is N91. Substrate is bound by residues W92, R94, R211, and 217 to 219 (RTS). Residue E230 coordinates Mg(2+).

The protein belongs to the UPP synthase family. As to quaternary structure, homodimer. Mg(2+) serves as cofactor.

Its function is as follows. Catalyzes the condensation of isopentenyl diphosphate (IPP) with allylic pyrophosphates generating different type of terpenoids. The polypeptide is Isoprenyl transferase (Bifidobacterium longum (strain NCC 2705)).